The primary structure comprises 330 residues: Cathepsin S (330 aa).

The N-terminal stretch at 1–17 (MKQLVCVLFVCSSAVTQ) is a signal peptide. A propeptide spans 18–114 (LHKDPTLDHH…ITYKSNPNQM (97 aa)) (activation peptide). An N-linked (GlcNAc...) asparagine glycan is attached at asparagine 104. 4 cysteine pairs are disulfide-bonded: cysteine 126–cysteine 223, cysteine 136–cysteine 179, cysteine 170–cysteine 212, and cysteine 271–cysteine 319. Cysteine 139 is an active-site residue. Catalysis depends on residues histidine 277 and asparagine 297.

Belongs to the peptidase C1 family.

Its subcellular location is the lysosome. It localises to the secreted. The protein localises to the cytoplasmic vesicle. The protein resides in the phagosome. It catalyses the reaction Similar to cathepsin L, but with much less activity on Z-Phe-Arg-|-NHMec, and more activity on the Z-Val-Val-Arg-|-Xaa compound.. Thiol protease. Key protease responsible for the removal of the invariant chain from MHC class II molecules and MHC class II antigen presentation. The bond-specificity of this proteinase is in part similar to the specificities of cathepsin L. In Saimiri boliviensis boliviensis (Bolivian squirrel monkey), this protein is Cathepsin S (CTSS).